The chain runs to 604 residues: Matrix metalloproteinase-21 (604 aa).

Residues 1–22 (MPSIKLLVWCCLCVISPRLCHS) form the signal peptide. Residues 23–180 (EKLFHSRDRS…PDPPKIRRKR (158 aa)) constitute a propeptide that is removed on maturation. The segment at 132–175 (KPRCGVPDNQMAKKETEKPTAAQSLENKTKDSENVTQQNPDPPK) is disordered. Residues 133–140 (PRCGVPDN) carry the Cysteine switch motif. A Zn(2+)-binding site is contributed by C135. 2 N-linked (GlcNAc...) asparagine glycosylation sites follow: N158 and N165. A Zn(2+)-binding site is contributed by H318. Residue E319 is part of the active site. The Zn(2+) site is built by H322 and H328. An intrachain disulfide couples C364 to C595. 4 Hemopexin repeats span residues 365-424 (EGPF…WHGI), 426-482 (VQNI…FPGI), 483-531 (PSPI…FPAV), and 538-594 (KGNI…WFDI). N-linked (GlcNAc...) asparagine glycosylation is found at N404 and N407.

The protein belongs to the peptidase M10A family. Zn(2+) is required as a cofactor. It depends on Ca(2+) as a cofactor. Post-translationally, the precursor is cleaved by a furin endopeptidase.

Its subcellular location is the secreted. Its function is as follows. Plays a specialized role in the generation of left-right asymmetry during embryogenesis. May act as a negative regulator of the NOTCH-signaling pathway. The chain is Matrix metalloproteinase-21 (mmp21) from Xenopus laevis (African clawed frog).